The chain runs to 131 residues: Profilin (131 aa).

It belongs to the profilin family. In terms of assembly, occurs in many kinds of cells as a complex with monomeric actin in a 1:1 ratio.

The protein localises to the cytoplasm. It is found in the cytoskeleton. Binds to actin and affects the structure of the cytoskeleton. At high concentrations, profilin prevents the polymerization of actin, whereas it enhances it at low concentrations. By binding to PIP2, it inhibits the formation of IP3 and DG. This is Profilin from Cucumis melo (Muskmelon).